The sequence spans 150 residues: MSDFIQSYNNDPFLGNLSTPVSTSTFTKGLLNNLPAYRRGLSPLLRGLEIGMAHGYFLVGPFDKLGPLRNTDVALLSGFLSAVGLIIILTVCLSMYGNVSFDKDDAKDLLQTTEGWGQFTAGFLVGAVGGSGFAYLLLANIPVLQNLGLS.

The Stromal portion of the chain corresponds to 1–72 (MSDFIQSYNN…DKLGPLRNTD (72 aa)). Residues 73–93 (VALLSGFLSAVGLIIILTVCL) traverse the membrane as a helical segment. Over 94–118 (SMYGNVSFDKDDAKDLLQTTEGWGQ) the chain is Lumenal. A helical membrane pass occupies residues 119–139 (FTAGFLVGAVGGSGFAYLLLA). The Stromal portion of the chain corresponds to 140-150 (NIPVLQNLGLS).

Belongs to the PsaL family.

Its subcellular location is the plastid. The protein localises to the chloroplast thylakoid membrane. The polypeptide is Photosystem I reaction center subunit XI (Gracilaria tenuistipitata var. liui (Red alga)).